Reading from the N-terminus, the 458-residue chain is Monomethylamine methyltransferase MtmB (458 aa).

Residue pyrrolysine 202 is a non-standard amino acid, pyrrolysine.

The protein belongs to the monomethylamine methyltransferase family. In terms of assembly, can form a complex with MtmC.

It catalyses the reaction Co(I)-[methylamine-specific corrinoid protein] + methylamine + H(+) = methyl-Co(III)-[methylamine-specific corrinoid protein] + NH4(+). The protein operates within one-carbon metabolism; methanogenesis from methylamine. Catalyzes the transfer of the methyl group from monomethylamine to the corrinoid cofactor of MtmC. This chain is Monomethylamine methyltransferase MtmB (mtmB1), found in Methanosarcina mazei (strain ATCC BAA-159 / DSM 3647 / Goe1 / Go1 / JCM 11833 / OCM 88) (Methanosarcina frisia).